The primary structure comprises 520 residues: Cytochrome P450 4F8 (520 aa).

Residues 15–37 (AASPWLLLLVVGASWLLARILAW) form a helical membrane-spanning segment. Cys468 contacts heme.

It belongs to the cytochrome P450 family. Requires heme as cofactor. In terms of tissue distribution, expressed in the epithelium of seminal vesicles, in renal cortex, in adult and fetal liver, in epidermis, in corneal epithelium, in sweat glands, hair follicles, epithelial linings of the ampulla of vas deferens and of the stomach and small intestine, as well as in the transitional epithelium of the bladder and ureter (at protein level). In the epidermis, expressed from the basal cell to the granular cell layers. In the corneal epithelium, expressed in all cell layers. Also detected in prostate. Up-regulated in the epidermis of psoriatic lesions.

It localises to the endoplasmic reticulum membrane. The protein localises to the microsome membrane. The enzyme catalyses an organic molecule + reduced [NADPH--hemoprotein reductase] + O2 = an alcohol + oxidized [NADPH--hemoprotein reductase] + H2O + H(+). The catalysed reaction is (5Z,8Z,11Z,14Z)-eicosatetraenoate + reduced [NADPH--hemoprotein reductase] + O2 = (18R)-hydroxy-(5Z,8Z,11Z,14Z)-eicosatetraenoate + oxidized [NADPH--hemoprotein reductase] + H2O + H(+). It carries out the reaction (4Z,7Z,10Z,13Z,16Z)-docosapentaenoate + reduced [NADPH--hemoprotein reductase] + O2 = 20-hydroxy-(4Z,7Z,10Z,13Z,16Z)-docosapentaenoate + oxidized [NADPH--hemoprotein reductase] + H2O + H(+). It catalyses the reaction prostaglandin H1 + reduced [NADPH--hemoprotein reductase] + O2 = 19-hydroxyprostaglandin H1 + oxidized [NADPH--hemoprotein reductase] + H2O + H(+). The enzyme catalyses prostaglandin H2 + reduced [NADPH--hemoprotein reductase] + O2 = 19-hydroxyprostaglandin H2 + oxidized [NADPH--hemoprotein reductase] + H2O + H(+). The catalysed reaction is prostaglandin I2 + reduced [NADPH--hemoprotein reductase] + O2 = 19-hydroxy-prostaglandin I2 + oxidized [NADPH--hemoprotein reductase] + H2O + H(+). It carries out the reaction (4Z,7Z,10Z,13Z,16Z,19Z)-docosahexaenoate + reduced [NADPH--hemoprotein reductase] + O2 = 10,11-epoxy-(4Z,7Z,13Z,16Z,19Z)-docosapentaenoate + oxidized [NADPH--hemoprotein reductase] + H2O + H(+). It catalyses the reaction (4Z,7Z,10Z,13Z,16Z,19Z)-docosahexaenoate + reduced [NADPH--hemoprotein reductase] + O2 = 13,14-epoxy-(4Z,7Z,10Z,16Z,19Z)-docosapentaenoate + oxidized [NADPH--hemoprotein reductase] + H2O + H(+). The enzyme catalyses (4Z,7Z,10Z,13Z,16Z,19Z)-docosahexaenoate + reduced [NADPH--hemoprotein reductase] + O2 = 16,17-epoxy-(4Z,7Z,10Z,13Z,19Z)-docosapentaenoate + oxidized [NADPH--hemoprotein reductase] + H2O + H(+). The catalysed reaction is (4Z,7Z,10Z,13Z,16Z,19Z)-docosahexaenoate + reduced [NADPH--hemoprotein reductase] + O2 = 19,20-epoxy-(4Z,7Z,10Z,13Z,16Z)-docosapentaenoate + oxidized [NADPH--hemoprotein reductase] + H2O + H(+). It carries out the reaction (7Z,10Z,13Z,16Z,19Z)-docosapentaenoate + reduced [NADPH--hemoprotein reductase] + O2 = 10,11-epoxy-(7Z,13Z,16Z,19Z)-docosatetraenoate + oxidized [NADPH--hemoprotein reductase] + H2O + H(+). It catalyses the reaction (7Z,10Z,13Z,16Z,19Z)-docosapentaenoate + reduced [NADPH--hemoprotein reductase] + O2 = 13,14-epoxy-(7Z,10Z,16Z,19Z)-docosatetraenoate + oxidized [NADPH--hemoprotein reductase] + H2O + H(+). The enzyme catalyses (7Z,10Z,13Z,16Z,19Z)-docosapentaenoate + reduced [NADPH--hemoprotein reductase] + O2 = 16,17-epoxy-(7Z,10Z,13Z,19Z)-docosatetraenoate + oxidized [NADPH--hemoprotein reductase] + H2O + H(+). The catalysed reaction is (7Z,10Z,13Z,16Z,19Z)-docosapentaenoate + reduced [NADPH--hemoprotein reductase] + O2 = 19,20-epoxy-(7Z,10Z,13Z,16Z)-docosatetraenoate + oxidized [NADPH--hemoprotein reductase] + H2O + H(+). It functions in the pathway lipid metabolism; fatty acid metabolism. A cytochrome P450 monooxygenase involved in the metabolism of endogenous polyunsaturated fatty acids (PUFAs) and their oxygenated derivatives (oxylipins). Mechanistically, uses molecular oxygen inserting one oxygen atom into a substrate, and reducing the second into a water molecule, with two electrons provided by NADPH via cytochrome P450 reductase (CPR; NADPH-ferrihemoprotein reductase). Catalyzes the hydroxylation of carbon hydrogen bonds, with preference for omega-1 and omega-2 positions. Hydroxylates (5Z,8Z,11Z,14Z)-eicosatetraenoic acid (arachidonate) predominantly at omega-2 position to form (18R)-hydroxyeicosatetraenoic acid (18R-HETE). Exhibits omega-1 hydroxylase activity toward prostaglandin (PG) H1, PGH2 and PGI2. Catalyzes the epoxidation of double bonds of PUFAs, including docosahexaenoic and docosapentaenoic acids. Shows little activity against PGD2, PGE1, PGE2, PGF2alpha, and leukotriene B4. This is Cytochrome P450 4F8 from Homo sapiens (Human).